We begin with the raw amino-acid sequence, 355 residues long: N-acetyl-gamma-glutamyl-phosphate reductase (355 aa).

Residue cysteine 152 is part of the active site.

This sequence belongs to the NAGSA dehydrogenase family. Type 1 subfamily.

It is found in the cytoplasm. It catalyses the reaction N-acetyl-L-glutamate 5-semialdehyde + phosphate + NADP(+) = N-acetyl-L-glutamyl 5-phosphate + NADPH + H(+). Its pathway is amino-acid biosynthesis; L-arginine biosynthesis; N(2)-acetyl-L-ornithine from L-glutamate: step 3/4. In terms of biological role, catalyzes the NADPH-dependent reduction of N-acetyl-5-glutamyl phosphate to yield N-acetyl-L-glutamate 5-semialdehyde. This Psychrobacter arcticus (strain DSM 17307 / VKM B-2377 / 273-4) protein is N-acetyl-gamma-glutamyl-phosphate reductase.